The primary structure comprises 116 residues: Large ribosomal subunit protein bL17 (116 aa).

This sequence belongs to the bacterial ribosomal protein bL17 family. In terms of assembly, part of the 50S ribosomal subunit. Contacts protein L32.

The sequence is that of Large ribosomal subunit protein bL17 from Crocosphaera subtropica (strain ATCC 51142 / BH68) (Cyanothece sp. (strain ATCC 51142)).